Here is a 208-residue protein sequence, read N- to C-terminus: Ribosomal RNA small subunit methyltransferase G (208 aa).

Residues G75, L80, 126–127 (VE), and R141 contribute to the S-adenosyl-L-methionine site.

Belongs to the methyltransferase superfamily. RNA methyltransferase RsmG family.

The protein resides in the cytoplasm. It carries out the reaction guanosine(527) in 16S rRNA + S-adenosyl-L-methionine = N(7)-methylguanosine(527) in 16S rRNA + S-adenosyl-L-homocysteine. In terms of biological role, specifically methylates the N7 position of guanine in position 527 of 16S rRNA. This chain is Ribosomal RNA small subunit methyltransferase G, found in Marinomonas sp. (strain MWYL1).